A 720-amino-acid polypeptide reads, in one-letter code: Glycine--tRNA ligase beta subunit (720 aa).

Belongs to the class-II aminoacyl-tRNA synthetase family. In terms of assembly, tetramer of two alpha and two beta subunits.

Its subcellular location is the cytoplasm. The enzyme catalyses tRNA(Gly) + glycine + ATP = glycyl-tRNA(Gly) + AMP + diphosphate. The sequence is that of Glycine--tRNA ligase beta subunit from Acidovorax sp. (strain JS42).